The primary structure comprises 355 residues: Protein pelota homolog (355 aa).

The protein belongs to the eukaryotic release factor 1 family. Pelota subfamily. As to quaternary structure, monomer. A divalent metal cation is required as a cofactor.

It is found in the cytoplasm. Functionally, may function in recognizing stalled ribosomes, interact with stem-loop structures in stalled mRNA molecules, and effect endonucleolytic cleavage of the mRNA. May play a role in the release non-functional ribosomes and degradation of damaged mRNAs. Has endoribonuclease activity. The sequence is that of Protein pelota homolog from Halorubrum lacusprofundi (strain ATCC 49239 / DSM 5036 / JCM 8891 / ACAM 34).